The chain runs to 254 residues: UPF0328 protein ECU01_0070/ECU01_1540/ECU02_1570/ECU04_0080/ECU08_2100 (254 aa).

This sequence belongs to the UPF0328 family.

The chain is UPF0328 protein ECU01_0070/ECU01_1540/ECU02_1570/ECU04_0080/ECU08_2100 from Encephalitozoon cuniculi (strain GB-M1) (Microsporidian parasite).